The chain runs to 362 residues: Putative glutamate--cysteine ligase 2-1 (362 aa).

This sequence belongs to the glutamate--cysteine ligase type 2 family. YbdK subfamily.

The catalysed reaction is L-cysteine + L-glutamate + ATP = gamma-L-glutamyl-L-cysteine + ADP + phosphate + H(+). Its function is as follows. ATP-dependent carboxylate-amine ligase which exhibits weak glutamate--cysteine ligase activity. The polypeptide is Putative glutamate--cysteine ligase 2-1 (Streptomyces avermitilis (strain ATCC 31267 / DSM 46492 / JCM 5070 / NBRC 14893 / NCIMB 12804 / NRRL 8165 / MA-4680)).